We begin with the raw amino-acid sequence, 100 residues long: MARRCELTGKAVQVGHLVSHSNRKTKCRFLPNLCNVTLQSDALGKRVRLRVTAHALRSVEHRGGLDAFLIKAGEGDLSQTARLLKREIHKKLAETPAAAA.

This sequence belongs to the bacterial ribosomal protein bL28 family.

The sequence is that of Large ribosomal subunit protein bL28 from Methylobacterium radiotolerans (strain ATCC 27329 / DSM 1819 / JCM 2831 / NBRC 15690 / NCIMB 10815 / 0-1).